We begin with the raw amino-acid sequence, 179 residues long: uncharacterized protein (179 aa).

Residues 160–179 (QPIEPNGTQPATETKTPVGV) form a disordered region. A compositionally biased stretch (polar residues) spans 165-179 (NGTQPATETKTPVGV).

This sequence belongs to the Dps family.

This is an uncharacterized protein from Anabaena variabilis.